Consider the following 476-residue polypeptide: MRSFLLILFCVSLLTGCQGERVDAAKAVETQPKTQLNVGTLYGAQIYVTTGQGLAGFDYEMAERFAKHQGLTLNMQPYPTISDLYQAMRNGEIDLIAAGLADTQSRREQFRLGPPLYYVNQVLVYKQGAKYPTDVSQLDDNITVISDSSFIETLAEMQKLYPELVWDQQWDKDSEELLAMIARDEISYTIADSTTFEINRRYMPELRAGPVLREGQAVVWLLPPNGSDQLMSDLLSFWHQEKRAGTLAHLNEKYFAHVKRFDYVDTRAFLRAIDSRLPKYRDNFVEYAGDLDWRKLAATAYQESHWNPNARSPTGVRGMMMLTLPTAKQMGIDNRLDPEQSIRGGAKYLSDILNRLPESIPENQRMWFALASYNIGYGHVEDARKLAQSMGLNPSAWRDLKKVLPLLQKRKYYKQTRYGYARGSEAVHYVDNIRRYYDTLVWIDNQNQQLQDEVMEAQQQTAEKQSQSEISAAQPN.

The N-terminal stretch at 1-15 (MRSFLLILFCVSLLT) is a signal peptide. Residues 16 to 258 (GCQGERVDAA…HLNEKYFAHV (243 aa)) form a non-LT domain region. Residues 259–476 (KRFDYVDTRA…QSEISAAQPN (218 aa)) form an LT domain region. E303 is an active-site residue. The tract at residues 456–476 (EAQQQTAEKQSQSEISAAQPN) is disordered.

It in the N-terminal section; belongs to the bacterial solute-binding protein 3 family. The protein in the C-terminal section; belongs to the transglycosylase Slt family.

It is found in the cell outer membrane. The catalysed reaction is Exolytic cleavage of the (1-&gt;4)-beta-glycosidic linkage between N-acetylmuramic acid (MurNAc) and N-acetylglucosamine (GlcNAc) residues in peptidoglycan, from either the reducing or the non-reducing ends of the peptidoglycan chains, with concomitant formation of a 1,6-anhydrobond in the MurNAc residue.. Murein-degrading enzyme that degrades murein glycan strands and insoluble, high-molecular weight murein sacculi, with the concomitant formation of a 1,6-anhydromuramoyl product. Lytic transglycosylases (LTs) play an integral role in the metabolism of the peptidoglycan (PG) sacculus. Their lytic action creates space within the PG sacculus to allow for its expansion as well as for the insertion of various structures such as secretion systems and flagella. The sequence is that of Membrane-bound lytic murein transglycosylase F from Shewanella loihica (strain ATCC BAA-1088 / PV-4).